Consider the following 627-residue polypeptide: 1-deoxy-D-xylulose-5-phosphate synthase (627 aa).

Thiamine diphosphate contacts are provided by residues H80 and 121 to 123 (GHS). D152 contributes to the Mg(2+) binding site. Residues 153–154 (GA), N181, Y288, and E370 each bind thiamine diphosphate. Position 181 (N181) interacts with Mg(2+).

This sequence belongs to the transketolase family. DXPS subfamily. In terms of assembly, homodimer. It depends on Mg(2+) as a cofactor. Requires thiamine diphosphate as cofactor.

It catalyses the reaction D-glyceraldehyde 3-phosphate + pyruvate + H(+) = 1-deoxy-D-xylulose 5-phosphate + CO2. The protein operates within metabolic intermediate biosynthesis; 1-deoxy-D-xylulose 5-phosphate biosynthesis; 1-deoxy-D-xylulose 5-phosphate from D-glyceraldehyde 3-phosphate and pyruvate: step 1/1. Catalyzes the acyloin condensation reaction between C atoms 2 and 3 of pyruvate and glyceraldehyde 3-phosphate to yield 1-deoxy-D-xylulose-5-phosphate (DXP). This Aliivibrio fischeri (strain MJ11) (Vibrio fischeri) protein is 1-deoxy-D-xylulose-5-phosphate synthase.